The following is a 221-amino-acid chain: DELTA-actitoxin-Ucs1a (221 aa).

A signal peptide spans 1 to 19 (MNRLIVLCLFVAMIYATIA). Positions 20-42 (LPKKEDISNDERSISVSKVPVKK) are excised as a propeptide. Positions 45–54 (AIAGAVIEGA) are plays an important role in the hemolytic activity. The tract at residues 53 to 72 (GAKLTFGILEKILTVLGDIN) is N-terminal region. Phosphocholine-binding residues include Ser-96, Val-129, Ser-147, Pro-149, Tyr-175, Tyr-179, and Tyr-180. Residues 147 to 162 (SVPYDYNLYSNWWNIK) are trp-rich region, which is important for the binding to lipid membrane. Positions 186-188 (KGD) match the Cell attachment site, crucial for protein stability motif.

It belongs to the actinoporin family. Sea anemone subfamily. Octamer or nonamer in membranes. Monomer in the soluble state.

It is found in the secreted. Its subcellular location is the nematocyst. The protein resides in the target cell membrane. Functionally, pore-forming protein that forms cations-selective hydrophilic pores of around 1 nm and causes cytolysis. Pore formation is a multi-step process that involves specific recognition of membrane sphingomyelin (but neither cholesterol nor phosphatidylcholine) using aromatic rich region and adjacent phosphocholine (POC) binding site, firm binding to the membrane (mainly driven by hydrophobic interactions) accompanied by the transfer of the N-terminal region to the lipid-water interface and finally pore formation after oligomerization of monomers. The chain is DELTA-actitoxin-Ucs1a from Urticina crassicornis (Mottled anemone).